The following is a 142-amino-acid chain: Two-component response regulator ARR22 (142 aa).

Residues 23–140 form the Response regulatory domain; it reads NVLIVDDDPL…KIFPLISHLF (118 aa). 4-aspartylphosphate is present on aspartate 74.

The protein belongs to the ARR family. Type-A subfamily. In terms of processing, two-component system major event consists of a His-to-Asp phosphorelay between a sensor histidine kinase (HK) and a response regulator (RR). In plants, the His-to-Asp phosphorelay involves an additional intermediate named Histidine-containing phosphotransfer protein (HPt). This multistep phosphorelay consists of a His-Asp-His-Asp sequential transfer of a phosphate group between first a His and an Asp of the HK protein, followed by the transfer to a conserved His of the HPt protein and finally the transfer to an Asp in the receiver domain of the RR protein.

The protein resides in the nucleus. In terms of biological role, functions as a response regulator involved in His-to-Asp phosphorelay signal transduction system. Phosphorylation of the Asp residue in the receiver domain activates the ability of the protein to promote the transcription of target genes. Type-A response regulators seem to act as negative regulators of the cytokinin signaling. The protein is Two-component response regulator ARR22 (ARR22) of Arabidopsis thaliana (Mouse-ear cress).